Here is a 758-residue protein sequence, read N- to C-terminus: 5-methyltetrahydropteroyltriglutamate--homocysteine methyltransferase (758 aa).

Residues 17–20 and lysine 117 each bind 5-methyltetrahydropteroyltri-L-glutamate; that span reads RELK. L-homocysteine contacts are provided by residues 434–436 and glutamate 487; that span reads IGS. L-methionine contacts are provided by residues 434–436 and glutamate 487; that span reads IGS. 5-methyltetrahydropteroyltri-L-glutamate contacts are provided by residues 518–519 and tryptophan 564; that span reads RC. Residue aspartate 602 participates in L-homocysteine binding. Aspartate 602 contributes to the L-methionine binding site. 5-methyltetrahydropteroyltri-L-glutamate is bound at residue glutamate 608. 3 residues coordinate Zn(2+): histidine 644, cysteine 646, and glutamate 668. The active-site Proton donor is the histidine 697. Residue cysteine 729 participates in Zn(2+) binding.

Belongs to the vitamin-B12 independent methionine synthase family. Zn(2+) is required as a cofactor.

The catalysed reaction is 5-methyltetrahydropteroyltri-L-glutamate + L-homocysteine = tetrahydropteroyltri-L-glutamate + L-methionine. It participates in amino-acid biosynthesis; L-methionine biosynthesis via de novo pathway; L-methionine from L-homocysteine (MetE route): step 1/1. Its function is as follows. Catalyzes the transfer of a methyl group from 5-methyltetrahydrofolate to homocysteine resulting in methionine formation. This chain is 5-methyltetrahydropteroyltriglutamate--homocysteine methyltransferase, found in Photorhabdus laumondii subsp. laumondii (strain DSM 15139 / CIP 105565 / TT01) (Photorhabdus luminescens subsp. laumondii).